A 365-amino-acid polypeptide reads, in one-letter code: 3-isopropylmalate dehydrogenase (365 aa).

Arg96, Arg106, Arg134, and Asp224 together coordinate substrate. Mg(2+)-binding residues include Asp224, Asp248, and Asp252. An NAD(+)-binding site is contributed by 288–300 (GSAPTIAKQNIAN).

This sequence belongs to the isocitrate and isopropylmalate dehydrogenases family. LeuB type 1 subfamily. As to quaternary structure, homodimer. Requires Mg(2+) as cofactor. Mn(2+) serves as cofactor.

Its subcellular location is the cytoplasm. It catalyses the reaction (2R,3S)-3-isopropylmalate + NAD(+) = 4-methyl-2-oxopentanoate + CO2 + NADH. It participates in amino-acid biosynthesis; L-leucine biosynthesis; L-leucine from 3-methyl-2-oxobutanoate: step 3/4. Catalyzes the oxidation of 3-carboxy-2-hydroxy-4-methylpentanoate (3-isopropylmalate) to 3-carboxy-4-methyl-2-oxopentanoate. The product decarboxylates to 4-methyl-2 oxopentanoate. The sequence is that of 3-isopropylmalate dehydrogenase from Dehalococcoides mccartyi (strain ATCC BAA-2266 / KCTC 15142 / 195) (Dehalococcoides ethenogenes (strain 195)).